The following is a 230-amino-acid chain: Acetyltransferase (230 aa).

In terms of domain architecture, N-acetyltransferase spans 143–230; the sequence is RYLDGKVICD…RVAVYKARQT (88 aa).

It participates in mycotoxin biosynthesis. Its function is as follows. Acetyltransferase; part of the satratoxin SC3 cluster involved in the biosynthesis of satratoxins, trichothecene mycotoxins that are associated with human food poisonings. Satratoxins are suggested to be made by products of multiple gene clusters (SC1, SC2 and SC3) that encode 21 proteins in all, including polyketide synthases, acetyltransferases, and other enzymes expected to modify the trichothecene skeleton. SC1 encodes 10 proteins, SAT1 to SAT10. The largest are SAT8, which encodes a putative polyketide synthase (PKS) with a conventional non-reducing architecture, and SAT10, a putative protein containing four ankyrin repeats and thus may be involved in protein scaffolding. The putative short-chain reductase SAT3 may assist the PKS in some capacity. SAT6 contains a secretory lipase domain and acts probably as a trichothecene esterase. SAT5 encodes a putative acetyltransferase, and so, with SAT6, may affect endogenous protection from toxicity. The probable transcription factor SAT9 may regulate the expression of the SC1 cluster. SC2 encodes proteins SAT11 to SAT16, the largest of which encodes the putative reducing PKS SAT13. SAT11 is a cytochrome P450 monooxygenase, while SAT14 and SAT16 are probable acetyltransferases. The SC2 cluster may be regulated by the transcription factor SAT15. SC3 is a small cluster that encodes 5 proteins, SAT17 to SAT21. SAT21 is a putative MFS-type transporter which may have a role in exporting secondary metabolites. The four other proteins putatively encoded in SC3 include the taurine hydroxylase-like protein SAT17, the O-methyltransferase SAT18, the acetyltransferase SAT19, and the Cys6-type zinc finger SAT20, the latter being probably involved in regulation of SC3 expression. In Stachybotrys chartarum (strain CBS 109288 / IBT 7711) (Toxic black mold), this protein is Acetyltransferase.